A 151-amino-acid polypeptide reads, in one-letter code: Large ribosomal subunit protein uL15 (151 aa).

Residues 37–57 (GMRGQKSRSGRPTRPGFEGGQ) form a disordered region.

This sequence belongs to the universal ribosomal protein uL15 family. As to quaternary structure, part of the 50S ribosomal subunit.

Binds to the 23S rRNA. This Prochlorococcus marinus (strain MIT 9313) protein is Large ribosomal subunit protein uL15.